The following is a 298-amino-acid chain: Glycine--tRNA ligase alpha subunit (298 aa).

The protein belongs to the class-II aminoacyl-tRNA synthetase family. In terms of assembly, tetramer of two alpha and two beta subunits.

Its subcellular location is the cytoplasm. It catalyses the reaction tRNA(Gly) + glycine + ATP = glycyl-tRNA(Gly) + AMP + diphosphate. The polypeptide is Glycine--tRNA ligase alpha subunit (glyQ) (Helicobacter pylori (strain J99 / ATCC 700824) (Campylobacter pylori J99)).